The chain runs to 255 residues: Cell division protein DivIB (255 aa).

Over 1-30 the chain is Cytoplasmic; it reads MKNSKVIKLQDRVPKLKNQKKRNKPPVNHR. The chain crosses the membrane as a helical span at residues 31-51; the sequence is LILYISILFLLVLFLIYFRSP. Topologically, residues 52-255 are extracellular; sequence LSNIKKISVF…FKYLDDEKKK (204 aa). The POTRA domain occupies 53–121; sequence SNIKKISVFG…NKIDIHIEEY (69 aa).

Belongs to the FtsQ/DivIB family. DivIB subfamily.

It is found in the cell membrane. In terms of biological role, cell division protein that may be involved in stabilizing or promoting the assembly of the division complex. This is Cell division protein DivIB from Bacillus cytotoxicus (strain DSM 22905 / CIP 110041 / 391-98 / NVH 391-98).